Consider the following 371-residue polypeptide: UDP-N-acetylglucosamine--N-acetylmuramyl-(pentapeptide) pyrophosphoryl-undecaprenol N-acetylglucosamine transferase (371 aa).

UDP-N-acetyl-alpha-D-glucosamine-binding positions include 15 to 17 (TGG), asparagine 126, arginine 172, serine 199, isoleucine 256, 275 to 280 (ALTVSE), and glutamine 301.

The protein belongs to the glycosyltransferase 28 family. MurG subfamily.

The protein localises to the cell inner membrane. It catalyses the reaction di-trans,octa-cis-undecaprenyl diphospho-N-acetyl-alpha-D-muramoyl-L-alanyl-D-glutamyl-meso-2,6-diaminopimeloyl-D-alanyl-D-alanine + UDP-N-acetyl-alpha-D-glucosamine = di-trans,octa-cis-undecaprenyl diphospho-[N-acetyl-alpha-D-glucosaminyl-(1-&gt;4)]-N-acetyl-alpha-D-muramoyl-L-alanyl-D-glutamyl-meso-2,6-diaminopimeloyl-D-alanyl-D-alanine + UDP + H(+). It participates in cell wall biogenesis; peptidoglycan biosynthesis. Cell wall formation. Catalyzes the transfer of a GlcNAc subunit on undecaprenyl-pyrophosphoryl-MurNAc-pentapeptide (lipid intermediate I) to form undecaprenyl-pyrophosphoryl-MurNAc-(pentapeptide)GlcNAc (lipid intermediate II). This chain is UDP-N-acetylglucosamine--N-acetylmuramyl-(pentapeptide) pyrophosphoryl-undecaprenol N-acetylglucosamine transferase, found in Francisella tularensis subsp. holarctica (strain FTNF002-00 / FTA).